The chain runs to 184 residues: Pyridoxal 5'-phosphate synthase subunit PdxT (184 aa).

Position 46–48 (46–48 (GES)) interacts with L-glutamine. Residue Cys-75 is the Nucleophile of the active site. L-glutamine-binding positions include Arg-101 and 129–130 (IR). Residues His-165 and Glu-167 each act as charge relay system in the active site.

Belongs to the glutaminase PdxT/SNO family. In terms of assembly, in the presence of PdxS, forms a dodecamer of heterodimers. Only shows activity in the heterodimer.

It catalyses the reaction aldehydo-D-ribose 5-phosphate + D-glyceraldehyde 3-phosphate + L-glutamine = pyridoxal 5'-phosphate + L-glutamate + phosphate + 3 H2O + H(+). It carries out the reaction L-glutamine + H2O = L-glutamate + NH4(+). Its pathway is cofactor biosynthesis; pyridoxal 5'-phosphate biosynthesis. Catalyzes the hydrolysis of glutamine to glutamate and ammonia as part of the biosynthesis of pyridoxal 5'-phosphate. The resulting ammonia molecule is channeled to the active site of PdxS. This is Pyridoxal 5'-phosphate synthase subunit PdxT from Staphylococcus haemolyticus (strain JCSC1435).